The sequence spans 199 residues: Adenylyl-sulfate kinase (199 aa).

Residues 1 to 22 form a disordered region; that stretch reads MSESNHITWHDSEVTKKQRQHK. Residue 34-41 participates in ATP binding; the sequence is GLSGSGKS. Ser108 (phosphoserine intermediate) is an active-site residue.

The protein belongs to the APS kinase family.

It carries out the reaction adenosine 5'-phosphosulfate + ATP = 3'-phosphoadenylyl sulfate + ADP + H(+). Its pathway is sulfur metabolism; hydrogen sulfide biosynthesis; sulfite from sulfate: step 2/3. Its function is as follows. Catalyzes the synthesis of activated sulfate. This is Adenylyl-sulfate kinase from Staphylococcus epidermidis (strain ATCC 12228 / FDA PCI 1200).